A 788-amino-acid polypeptide reads, in one-letter code: Bifunctional purine biosynthetic protein ADE1 (788 aa).

Positions 1 to 430 (MEPIIALLIG…DIAHHALNPK (430 aa)) are GARS. The ATP-grasp domain occupies 115–321 (KDFMHRNNIP…LAEIILACVN (207 aa)). 141 to 202 (LDTCTFDVVI…EELLEGEELS (62 aa)) provides a ligand contact to ATP. Residues Glu-291 and Asn-293 each contribute to the Mg(2+) site. The interval 437 to 769 (LTYENSGVSV…TVYRIGQLVD (333 aa)) is AIRS.

This sequence in the N-terminal section; belongs to the GARS family. The protein in the C-terminal section; belongs to the AIR synthase family. Requires Mg(2+) as cofactor. The cofactor is Mn(2+).

It is found in the cytoplasm. It localises to the cytosol. The catalysed reaction is 5-phospho-beta-D-ribosylamine + glycine + ATP = N(1)-(5-phospho-beta-D-ribosyl)glycinamide + ADP + phosphate + H(+). The enzyme catalyses 2-formamido-N(1)-(5-O-phospho-beta-D-ribosyl)acetamidine + ATP = 5-amino-1-(5-phospho-beta-D-ribosyl)imidazole + ADP + phosphate + H(+). The protein operates within purine metabolism; IMP biosynthesis via de novo pathway; 5-amino-1-(5-phospho-D-ribosyl)imidazole from N(2)-formyl-N(1)-(5-phospho-D-ribosyl)glycinamide: step 2/2. It functions in the pathway purine metabolism; IMP biosynthesis via de novo pathway; N(1)-(5-phospho-D-ribosyl)glycinamide from 5-phospho-alpha-D-ribose 1-diphosphate: step 2/2. In terms of biological role, catalyzes the second and fifth step in the 'de novo' purine biosynthesis pathway; contains phosphoribosylamine--glycine ligase (GARS) and phosphoribosylformylglycinamidine cyclo-ligase (AIRS) activities. This Schizosaccharomyces pombe (strain 972 / ATCC 24843) (Fission yeast) protein is Bifunctional purine biosynthetic protein ADE1.